A 168-amino-acid polypeptide reads, in one-letter code: Disulfide bond formation protein B 2 (168 aa).

Topologically, residues 1–9 are cytoplasmic; the sequence is MLPARLRTF. A helical transmembrane segment spans residues 10–26; sequence FLPACLVALAVLVASFR. At 27–44 the chain is on the periplasmic side; it reads LENTVGLMPCPLCLSQRL. The cysteines at positions 36 and 39 are disulfide-linked. The chain crosses the membrane as a helical span at residues 45–61; sequence LLGGYALLCFAAVLQAP. Residues 62–67 are Cytoplasmic-facing; that stretch reads GTRGIL. Residues 68-85 form a helical membrane-spanning segment; sequence RYARLALGCSLAGALLAA. Residues 86 to 140 are Periplasmic-facing; that stretch reads RHVWLQGAEGVNEVCPVPIGRVFEQSWSEAARQLLLGGPDCRSLAWSFLDLTLPE. A disulfide bond links cysteine 100 and cysteine 126. A helical membrane pass occupies residues 141–159; sequence WSLLAFLLLAVLPLSCLLA. Topologically, residues 160–168 are cytoplasmic; sequence YRFRTLART.

This sequence belongs to the DsbB family.

It is found in the cell inner membrane. In terms of biological role, required for disulfide bond formation in some periplasmic proteins. Acts by oxidizing the DsbA protein. This chain is Disulfide bond formation protein B 2 (dsbB2), found in Pseudomonas putida (strain ATCC 47054 / DSM 6125 / CFBP 8728 / NCIMB 11950 / KT2440).